We begin with the raw amino-acid sequence, 227 residues long: ATP phosphoribosyltransferase (227 aa).

Belongs to the ATP phosphoribosyltransferase family. Short subfamily. As to quaternary structure, heteromultimer composed of HisG and HisZ subunits.

The protein resides in the cytoplasm. It carries out the reaction 1-(5-phospho-beta-D-ribosyl)-ATP + diphosphate = 5-phospho-alpha-D-ribose 1-diphosphate + ATP. It functions in the pathway amino-acid biosynthesis; L-histidine biosynthesis; L-histidine from 5-phospho-alpha-D-ribose 1-diphosphate: step 1/9. Catalyzes the condensation of ATP and 5-phosphoribose 1-diphosphate to form N'-(5'-phosphoribosyl)-ATP (PR-ATP). Has a crucial role in the pathway because the rate of histidine biosynthesis seems to be controlled primarily by regulation of HisG enzymatic activity. The sequence is that of ATP phosphoribosyltransferase from Rhodospirillum rubrum (strain ATCC 11170 / ATH 1.1.1 / DSM 467 / LMG 4362 / NCIMB 8255 / S1).